Here is a 598-residue protein sequence, read N- to C-terminus: Aspartate--tRNA(Asp/Asn) ligase (598 aa).

Glu177 contacts L-aspartate. The segment at 201-204 (QIFK) is aspartate. L-aspartate-binding residues include Arg223 and His451. Position 223-225 (223-225 (RDE)) interacts with ATP. Glu485 contributes to the ATP binding site. Arg492 contacts L-aspartate. 537–540 (GVDR) serves as a coordination point for ATP.

The protein belongs to the class-II aminoacyl-tRNA synthetase family. Type 1 subfamily. As to quaternary structure, homodimer.

It is found in the cytoplasm. It catalyses the reaction tRNA(Asx) + L-aspartate + ATP = L-aspartyl-tRNA(Asx) + AMP + diphosphate. Its function is as follows. Aspartyl-tRNA synthetase with relaxed tRNA specificity since it is able to aspartylate not only its cognate tRNA(Asp) but also tRNA(Asn). Reaction proceeds in two steps: L-aspartate is first activated by ATP to form Asp-AMP and then transferred to the acceptor end of tRNA(Asp/Asn). This Anaplasma phagocytophilum (strain HZ) protein is Aspartate--tRNA(Asp/Asn) ligase.